The chain runs to 564 residues: ATP-dependent RNA helicase DBP3 (564 aa).

Residues 31-125 (TKQQTMSKDK…TNYTQSSKLS (95 aa)) form a disordered region. The span at 58–73 (ADSKKQRKLEKQEKKD) shows a compositional bias: basic and acidic residues. Basic residues predominate over residues 74 to 96 (KKDKKDKKEKKEKKEKKHKKEKK). The segment covering 112–125 (SSSSTNYTQSSKLS) has biased composition (low complexity). Residues 155-181 (LSFDQVQLTSAITSKLSKFDKPTPIQS) carry the Q motif motif. A Helicase ATP-binding domain is found at 184–356 (WPFLLSGKDV…NNFMNSPVKV (173 aa)). 197–204 (AETGSGKT) is an ATP binding site. The DEAD box motif lies at 303 to 306 (DEAD). The Helicase C-terminal domain maps to 385–534 (KLIQLLRKYN…PVPEELLKFG (150 aa)).

It belongs to the DEAD box helicase family. DDX5/DBP2 subfamily.

The protein localises to the nucleus. It is found in the nucleolus. The enzyme catalyses ATP + H2O = ADP + phosphate + H(+). Functionally, ATP-dependent RNA helicase required for 60S ribosomal subunit synthesis. Involved in efficient pre-rRNA processing, predominantly at site A3, which is necessary for the normal formation of 25S and 5.8S rRNAs. The protein is ATP-dependent RNA helicase DBP3 (DBP3) of Candida albicans (strain SC5314 / ATCC MYA-2876) (Yeast).